The following is a 134-amino-acid chain: UPF0412 protein YaaI (134 aa).

A signal peptide spans M1–A23.

It belongs to the UPF0412 family.

The sequence is that of UPF0412 protein YaaI from Salmonella choleraesuis (strain SC-B67).